The sequence spans 484 residues: Glycogen synthase (484 aa).

K15 contributes to the ADP-alpha-D-glucose binding site.

It belongs to the glycosyltransferase 1 family. Bacterial/plant glycogen synthase subfamily.

The enzyme catalyses [(1-&gt;4)-alpha-D-glucosyl](n) + ADP-alpha-D-glucose = [(1-&gt;4)-alpha-D-glucosyl](n+1) + ADP + H(+). The protein operates within glycan biosynthesis; glycogen biosynthesis. Functionally, synthesizes alpha-1,4-glucan chains using ADP-glucose. The sequence is that of Glycogen synthase from Geotalea uraniireducens (strain Rf4) (Geobacter uraniireducens).